Reading from the N-terminus, the 436-residue chain is Protein PhoH2 (436 aa).

The region spanning 12–137 (RTYVLDTSVL…LVSKDLPMRL (126 aa)) is the PINc domain.

It in the N-terminal section; belongs to the PINc/VapC protein family. In the C-terminal section; belongs to the PhoH family.

It catalyses the reaction n ATP + n H2O + wound RNA = n ADP + n phosphate + unwound RNA.. The enzyme catalyses ATP + H2O = ADP + phosphate + H(+). It carries out the reaction GTP + H2O = GDP + phosphate + H(+). Its function is as follows. Unwinds and/or cleaves 5'-tailed RNA in vitro, the reaction is maximal with hydrolyzable ATP; double-stranded (ds)RNA and dsDNA are not unwound. Unlike the protein in mycobacteria there does not seem to be an antitoxin gene upstream, suggesting this is not a toxin-antitoxin system. Has ATPase and GTPase activities. The chain is Protein PhoH2 from Thermobispora bispora (strain ATCC 19993 / DSM 43833 / CBS 139.67 / JCM 10125 / KCTC 9307 / NBRC 14880 / R51).